The following is a 289-amino-acid chain: Diaminopimelate epimerase (289 aa).

Substrate-binding residues include asparagine 11 and asparagine 78. Cysteine 87 acts as the Proton donor in catalysis. Substrate contacts are provided by residues glycine 88 to asparagine 89, asparagine 163, asparagine 199, and glutamate 217 to arginine 218. The active-site Proton acceptor is the cysteine 226. Glycine 227–threonine 228 lines the substrate pocket.

It belongs to the diaminopimelate epimerase family. Homodimer.

It is found in the cytoplasm. It catalyses the reaction (2S,6S)-2,6-diaminopimelate = meso-2,6-diaminopimelate. Its pathway is amino-acid biosynthesis; L-lysine biosynthesis via DAP pathway; DL-2,6-diaminopimelate from LL-2,6-diaminopimelate: step 1/1. Functionally, catalyzes the stereoinversion of LL-2,6-diaminopimelate (L,L-DAP) to meso-diaminopimelate (meso-DAP), a precursor of L-lysine and an essential component of the bacterial peptidoglycan. This chain is Diaminopimelate epimerase, found in Mycolicibacterium vanbaalenii (strain DSM 7251 / JCM 13017 / BCRC 16820 / KCTC 9966 / NRRL B-24157 / PYR-1) (Mycobacterium vanbaalenii).